A 176-amino-acid polypeptide reads, in one-letter code: Neuroblastoma suppressor of tumorigenicity 1 (176 aa).

An N-terminal signal peptide occupies residues 1–17 (MTVWLLIGFLLPVAIFA). 5 disulfide bridges follow: cysteine 34-cysteine 84, cysteine 48-cysteine 98, cysteine 58-cysteine 117, cysteine 62-cysteine 119, and cysteine 81-cysteine 122. Residues 34–123 (CEAKNITQIV…ILQCSCQACG (90 aa)) form the CTCK domain. A disordered region spans residues 148–176 (ETLGHHHHRPPAREEDSPAQSQREGESEE).

Belongs to the DAN family. In terms of assembly, interacts with bmp2; the interaction is blocked in presence of nog.

It is found in the secreted. In terms of biological role, may act as a tumor suppressor. Cytokine that has an axial patterning activity. Acts like bone morpho-genetic protein (BMP) antagonist in embryonic explants. Blocks the bmp2 activity. This Xenopus tropicalis (Western clawed frog) protein is Neuroblastoma suppressor of tumorigenicity 1 (nbl1).